We begin with the raw amino-acid sequence, 490 residues long: 3-octaprenyl-4-hydroxybenzoate carboxy-lyase (490 aa).

Asn172 is a Mn(2+) binding site. Prenylated FMN contacts are provided by residues 175 to 177, 189 to 191, and 194 to 195; these read IYR, RWL, and RG. Glu238 is a Mn(2+) binding site. Catalysis depends on Asp287, which acts as the Proton donor.

This sequence belongs to the UbiD family. In terms of assembly, homohexamer. The cofactor is prenylated FMN. It depends on Mn(2+) as a cofactor.

The protein resides in the cell membrane. The enzyme catalyses a 4-hydroxy-3-(all-trans-polyprenyl)benzoate + H(+) = a 2-(all-trans-polyprenyl)phenol + CO2. It participates in cofactor biosynthesis; ubiquinone biosynthesis. In terms of biological role, catalyzes the decarboxylation of 3-octaprenyl-4-hydroxy benzoate to 2-octaprenylphenol, an intermediate step in ubiquinone biosynthesis. The sequence is that of 3-octaprenyl-4-hydroxybenzoate carboxy-lyase from Idiomarina loihiensis (strain ATCC BAA-735 / DSM 15497 / L2-TR).